We begin with the raw amino-acid sequence, 264 residues long: uncharacterized protein (264 aa).

Positions 235–264 are disordered; sequence ESSDEEDNDDDIINNDTNNDINNDDIEIKT. Positions 237–247 are enriched in acidic residues; it reads SDEEDNDDDII.

This is an uncharacterized protein from Acanthamoeba polyphaga mimivirus (APMV).